Reading from the N-terminus, the 243-residue chain is UTP--glucose-1-phosphate uridylyltransferase AglF (243 aa).

Belongs to the UDPGP type 2 family.

It catalyses the reaction alpha-D-glucose 1-phosphate + UTP + H(+) = UDP-alpha-D-glucose + diphosphate. Its pathway is cell surface structure biogenesis; S-layer biogenesis. In terms of biological role, involved in the assembly of a N-linked pentasaccharide that decorates the S-layer glycoprotein and flagellins. Involved in the biosynthesis of the hexuronic acid found at position 3 of the pentasaccharide. This is UTP--glucose-1-phosphate uridylyltransferase AglF (aglF) from Haloferax volcanii (strain ATCC 29605 / DSM 3757 / JCM 8879 / NBRC 14742 / NCIMB 2012 / VKM B-1768 / DS2) (Halobacterium volcanii).